A 164-amino-acid polypeptide reads, in one-letter code: UPF0114 protein YqhA (164 aa).

The next 3 helical transmembrane spans lie at 10 to 32 (YASR…ALAL), 53 to 75 (LILV…MVMF), and 136 to 155 (LMWY…VMGY).

Belongs to the UPF0114 family.

It is found in the cell membrane. In Shigella flexneri, this protein is UPF0114 protein YqhA.